Here is a 289-residue protein sequence, read N- to C-terminus: Shikimate dehydrogenase (NADP(+)) (289 aa).

Shikimate contacts are provided by residues 22-24 (SRS) and threonine 69. The active-site Proton acceptor is the lysine 73. Glutamate 85 lines the NADP(+) pocket. Residues asparagine 94 and aspartate 109 each contribute to the shikimate site. NADP(+)-binding positions include 134–138 (GAGGA), 158–163 (NRTLSR), and isoleucine 226. Tyrosine 228 contacts shikimate. Glycine 249 provides a ligand contact to NADP(+).

It belongs to the shikimate dehydrogenase family. Homodimer.

It catalyses the reaction shikimate + NADP(+) = 3-dehydroshikimate + NADPH + H(+). Its pathway is metabolic intermediate biosynthesis; chorismate biosynthesis; chorismate from D-erythrose 4-phosphate and phosphoenolpyruvate: step 4/7. Involved in the biosynthesis of the chorismate, which leads to the biosynthesis of aromatic amino acids. Catalyzes the reversible NADPH linked reduction of 3-dehydroshikimate (DHSA) to yield shikimate (SA). The protein is Shikimate dehydrogenase (NADP(+)) of Brucella ovis (strain ATCC 25840 / 63/290 / NCTC 10512).